Reading from the N-terminus, the 227-residue chain is 2-C-methyl-D-erythritol 4-phosphate cytidylyltransferase (227 aa).

It belongs to the IspD/TarI cytidylyltransferase family. IspD subfamily.

It catalyses the reaction 2-C-methyl-D-erythritol 4-phosphate + CTP + H(+) = 4-CDP-2-C-methyl-D-erythritol + diphosphate. Its pathway is isoprenoid biosynthesis; isopentenyl diphosphate biosynthesis via DXP pathway; isopentenyl diphosphate from 1-deoxy-D-xylulose 5-phosphate: step 2/6. Its function is as follows. Catalyzes the formation of 4-diphosphocytidyl-2-C-methyl-D-erythritol from CTP and 2-C-methyl-D-erythritol 4-phosphate (MEP). This chain is 2-C-methyl-D-erythritol 4-phosphate cytidylyltransferase, found in Bordetella bronchiseptica (strain ATCC BAA-588 / NCTC 13252 / RB50) (Alcaligenes bronchisepticus).